We begin with the raw amino-acid sequence, 417 residues long: Leucine-rich repeat-containing protein 42 (417 aa).

LRR repeat units lie at residues 167-188 (CLHS…LAHL), 195-215 (SLTE…QKMT), 227-248 (KLKV…CFLF), and 252-273 (LLKF…LKKI). The interval 360–390 (FFRPKEQKDPDSSNSEKRRHSTKRTGADCVQ) is disordered. Residues 362 to 375 (RPKEQKDPDSSNSE) show a composition bias toward basic and acidic residues.

It belongs to the LRRC42 family.

The chain is Leucine-rich repeat-containing protein 42 (lrrc42) from Xenopus laevis (African clawed frog).